The following is a 304-amino-acid chain: Homoserine O-acetyltransferase (304 aa).

Cys142 acts as the Acyl-thioester intermediate in catalysis. Lys163 and Ser192 together coordinate substrate. The active-site Proton acceptor is His235. Residue Glu237 is part of the active site. Arg249 provides a ligand contact to substrate.

This sequence belongs to the MetA family.

The protein localises to the cytoplasm. The enzyme catalyses L-homoserine + acetyl-CoA = O-acetyl-L-homoserine + CoA. It functions in the pathway amino-acid biosynthesis; L-methionine biosynthesis via de novo pathway; O-acetyl-L-homoserine from L-homoserine: step 1/1. Its function is as follows. Transfers an acetyl group from acetyl-CoA to L-homoserine, forming acetyl-L-homoserine. This is Homoserine O-acetyltransferase from Clostridium beijerinckii (strain ATCC 51743 / NCIMB 8052) (Clostridium acetobutylicum).